The primary structure comprises 295 residues: Phosphatidylserine decarboxylase proenzyme (295 aa).

Active-site charge relay system; for autoendoproteolytic cleavage activity residues include Asp-113, His-169, and Ser-256. Residue Ser-256 is the Schiff-base intermediate with substrate; via pyruvic acid; for decarboxylase activity of the active site. Ser-256 carries the post-translational modification Pyruvic acid (Ser); by autocatalysis.

This sequence belongs to the phosphatidylserine decarboxylase family. PSD-B subfamily. Prokaryotic type II sub-subfamily. As to quaternary structure, heterodimer of a large membrane-associated beta subunit and a small pyruvoyl-containing alpha subunit. Requires pyruvate as cofactor. Is synthesized initially as an inactive proenzyme. Formation of the active enzyme involves a self-maturation process in which the active site pyruvoyl group is generated from an internal serine residue via an autocatalytic post-translational modification. Two non-identical subunits are generated from the proenzyme in this reaction, and the pyruvate is formed at the N-terminus of the alpha chain, which is derived from the carboxyl end of the proenzyme. The autoendoproteolytic cleavage occurs by a canonical serine protease mechanism, in which the side chain hydroxyl group of the serine supplies its oxygen atom to form the C-terminus of the beta chain, while the remainder of the serine residue undergoes an oxidative deamination to produce ammonia and the pyruvoyl prosthetic group on the alpha chain. During this reaction, the Ser that is part of the protease active site of the proenzyme becomes the pyruvoyl prosthetic group, which constitutes an essential element of the active site of the mature decarboxylase.

It is found in the cell membrane. The catalysed reaction is a 1,2-diacyl-sn-glycero-3-phospho-L-serine + H(+) = a 1,2-diacyl-sn-glycero-3-phosphoethanolamine + CO2. The protein operates within phospholipid metabolism; phosphatidylethanolamine biosynthesis; phosphatidylethanolamine from CDP-diacylglycerol: step 2/2. Its function is as follows. Catalyzes the formation of phosphatidylethanolamine (PtdEtn) from phosphatidylserine (PtdSer). This is Phosphatidylserine decarboxylase proenzyme from Clostridium novyi (strain NT).